Consider the following 344-residue polypeptide: Cyclin-G2 (344 aa).

Acidic residues predominate over residues 301-313; sequence ESESEDSCEDMSC. The segment at 301-320 is disordered; sequence ESESEDSCEDMSCGEESLSS.

It belongs to the cyclin family. Cyclin G subfamily. In terms of tissue distribution, high levels in cerebellum, thymus, spleen and prostate. Low levels in skeletal muscle.

The protein localises to the cytoplasm. Functionally, may play a role in growth regulation and in negative regulation of cell cycle progression. The chain is Cyclin-G2 (CCNG2) from Homo sapiens (Human).